The sequence spans 238 residues: Ion-translocating oxidoreductase complex subunit E (238 aa).

5 helical membrane-spanning segments follow: residues 41–61 (LGLG…VSLV), 71–91 (LPAF…LMQA), 95–115 (ELYQ…VILG), 130–150 (SFDG…LGGL), and 184–204 (GFLL…LIAL).

It belongs to the NqrDE/RnfAE family. As to quaternary structure, the complex is composed of six subunits: RnfA, RnfB, RnfC, RnfD, RnfE and RnfG.

Its subcellular location is the cell inner membrane. Functionally, part of a membrane-bound complex that couples electron transfer with translocation of ions across the membrane. In Pseudomonas aeruginosa (strain LESB58), this protein is Ion-translocating oxidoreductase complex subunit E.